Reading from the N-terminus, the 96-residue chain is Large ribosomal subunit protein eL43 (96 aa).

Residues 39–60 form a C4-type zinc finger; the sequence is CTFCGKTATKRTCVGIWKCKKC.

The protein belongs to the eukaryotic ribosomal protein eL43 family. Component of the large ribosomal subunit. Mature ribosomes consist of a small (40S) and a large (60S) subunit. The 40S subunit contains about 32 different proteins and 1 molecule of RNA (18S). The 60S subunit contains about 42 different proteins and 3 molecules of RNA (28S, 5.8S and 5S).

It localises to the cytoplasm. Its function is as follows. Component of the ribosome, a large ribonucleoprotein complex responsible for the synthesis of proteins in the cell. The small ribosomal subunit (SSU) binds messenger RNAs (mRNAs) and translates the encoded message by selecting cognate aminoacyl-transfer RNA (tRNA) molecules. The large subunit (LSU) contains the ribosomal catalytic site termed the peptidyl transferase center (PTC), which catalyzes the formation of peptide bonds, thereby polymerizing the amino acids delivered by tRNAs into a polypeptide chain. The nascent polypeptides leave the ribosome through a tunnel in the LSU and interact with protein factors that function in enzymatic processing, targeting, and the membrane insertion of nascent chains at the exit of the ribosomal tunnel. This chain is Large ribosomal subunit protein eL43, found in Plasmodium falciparum (isolate 3D7).